Here is a 353-residue protein sequence, read N- to C-terminus: Phospho-N-acetylmuramoyl-pentapeptide-transferase (353 aa).

10 helical membrane passes run 22 to 42 (FAFFIALCLSLFLMPKFITWA), 65 to 85 (TPTMGGLIFISSAVIASLFCI), 88 to 108 (DNIFAISALLCLILFCLIGLI), 129 to 149 (LLAQIIAGLICILPLYFSSEL), 161 to 181 (PLFDMEIFAIAFWILVLISSS), 192 to 212 (GLATVPSIFSLSTLGIFLYLS), 228 to 248 (GLGEVVIICAALIGALMGFLW), 256 to 276 (VFMGDSGSLALGGFIGFLAII), 281 to 301 (ILLLLIGFVFVLETVSVILQV), and 330 to 350 (KIIVRFWMIALLSNLLALASI).

Belongs to the glycosyltransferase 4 family. MraY subfamily. Requires Mg(2+) as cofactor.

It is found in the cell inner membrane. It carries out the reaction UDP-N-acetyl-alpha-D-muramoyl-L-alanyl-gamma-D-glutamyl-meso-2,6-diaminopimeloyl-D-alanyl-D-alanine + di-trans,octa-cis-undecaprenyl phosphate = di-trans,octa-cis-undecaprenyl diphospho-N-acetyl-alpha-D-muramoyl-L-alanyl-D-glutamyl-meso-2,6-diaminopimeloyl-D-alanyl-D-alanine + UMP. The protein operates within cell wall biogenesis; peptidoglycan biosynthesis. Catalyzes the initial step of the lipid cycle reactions in the biosynthesis of the cell wall peptidoglycan: transfers peptidoglycan precursor phospho-MurNAc-pentapeptide from UDP-MurNAc-pentapeptide onto the lipid carrier undecaprenyl phosphate, yielding undecaprenyl-pyrophosphoryl-MurNAc-pentapeptide, known as lipid I. This Campylobacter jejuni (strain RM1221) protein is Phospho-N-acetylmuramoyl-pentapeptide-transferase.